The chain runs to 124 residues: Small ribosomal subunit protein uS13 (124 aa).

Positions 99–124 (PCRGQKTKTNARTCKGPKKTVANKKK) are disordered. Basic residues predominate over residues 113–124 (KGPKKTVANKKK).

This sequence belongs to the universal ribosomal protein uS13 family. In terms of assembly, part of the 30S ribosomal subunit. Forms a loose heterodimer with protein S19. Forms two bridges to the 50S subunit in the 70S ribosome.

Functionally, located at the top of the head of the 30S subunit, it contacts several helices of the 16S rRNA. In the 70S ribosome it contacts the 23S rRNA (bridge B1a) and protein L5 of the 50S subunit (bridge B1b), connecting the 2 subunits; these bridges are implicated in subunit movement. Contacts the tRNAs in the A and P-sites. The polypeptide is Small ribosomal subunit protein uS13 (Lachnospira eligens (strain ATCC 27750 / DSM 3376 / VPI C15-48 / C15-B4) (Eubacterium eligens)).